The following is a 158-amino-acid chain: NAD(P)H-quinone oxidoreductase subunit N (158 aa).

This sequence belongs to the complex I NdhN subunit family. As to quaternary structure, NDH-1 can be composed of about 15 different subunits; different subcomplexes with different compositions have been identified which probably have different functions.

The protein localises to the cellular thylakoid membrane. It carries out the reaction a plastoquinone + NADH + (n+1) H(+)(in) = a plastoquinol + NAD(+) + n H(+)(out). The catalysed reaction is a plastoquinone + NADPH + (n+1) H(+)(in) = a plastoquinol + NADP(+) + n H(+)(out). In terms of biological role, NDH-1 shuttles electrons from an unknown electron donor, via FMN and iron-sulfur (Fe-S) centers, to quinones in the respiratory and/or the photosynthetic chain. The immediate electron acceptor for the enzyme in this species is believed to be plastoquinone. Couples the redox reaction to proton translocation, and thus conserves the redox energy in a proton gradient. Cyanobacterial NDH-1 also plays a role in inorganic carbon-concentration. This is NAD(P)H-quinone oxidoreductase subunit N from Synechococcus elongatus (strain ATCC 33912 / PCC 7942 / FACHB-805) (Anacystis nidulans R2).